Consider the following 200-residue polypeptide: HTH-type transcriptional repressor KstR2 (200 aa).

An HTH tetR-type domain is found at 9–69; sequence NSRRGELLEL…ELLRGFLDWL (61 aa). The segment at residues 32–51 is a DNA-binding region (H-T-H motif); that stretch reads TVRDIADGAGILSGSLYHHF.

Homodimer.

Its function is as follows. Controls the expression of a small regulon that may play a role in the utilization of cholesterol. The chain is HTH-type transcriptional repressor KstR2 (kstR2) from Mycobacterium tuberculosis (strain CDC 1551 / Oshkosh).